The following is a 179-amino-acid chain: MVVGAFPMAKLLYLGIRQVSKPLANRIKEAARRSEFFKTYICLPPAQLYHWVEMRTKMRIMGFRGTVIKPLNEEAAAELGAELLGEATIFIVGGGCLVLEYWRHQAQQRHKEEEQRAAWNALRDEVGHLALALEALQAQVQAAPPQGALEELRTELQEVRAQLCNPGRSASHAVPASKK.

A coiled-coil region spans residues 103-163; the sequence is RHQAQQRHKE…TELQEVRAQL (61 aa).

This sequence belongs to the OPA3 family. In terms of tissue distribution, ubiquitous. Most prominent expression in skeletal muscle and kidney.

The protein localises to the mitochondrion. Its function is as follows. May play some role in mitochondrial processes. This is Optic atrophy 3 protein (OPA3) from Homo sapiens (Human).